The following is a 105-amino-acid chain: Integration host factor subunit alpha (105 aa).

Belongs to the bacterial histone-like protein family. In terms of assembly, heterodimer of an alpha and a beta chain.

This protein is one of the two subunits of integration host factor, a specific DNA-binding protein that functions in genetic recombination as well as in transcriptional and translational control. The chain is Integration host factor subunit alpha from Rhodospirillum rubrum (strain ATCC 11170 / ATH 1.1.1 / DSM 467 / LMG 4362 / NCIMB 8255 / S1).